Consider the following 240-residue polypeptide: 2-C-methyl-D-erythritol 4-phosphate cytidylyltransferase (240 aa).

The protein belongs to the IspD/TarI cytidylyltransferase family. IspD subfamily.

The enzyme catalyses 2-C-methyl-D-erythritol 4-phosphate + CTP + H(+) = 4-CDP-2-C-methyl-D-erythritol + diphosphate. The protein operates within isoprenoid biosynthesis; isopentenyl diphosphate biosynthesis via DXP pathway; isopentenyl diphosphate from 1-deoxy-D-xylulose 5-phosphate: step 2/6. Catalyzes the formation of 4-diphosphocytidyl-2-C-methyl-D-erythritol from CTP and 2-C-methyl-D-erythritol 4-phosphate (MEP). In Chlorobium luteolum (strain DSM 273 / BCRC 81028 / 2530) (Pelodictyon luteolum), this protein is 2-C-methyl-D-erythritol 4-phosphate cytidylyltransferase.